The primary structure comprises 425 residues: Serine--tRNA ligase (425 aa).

Residue 231 to 233 participates in L-serine binding; that stretch reads TAE. 262 to 264 is a binding site for ATP; sequence RSE. Glu-285 contributes to the L-serine binding site. 349–352 provides a ligand contact to ATP; it reads EISS. Ser-385 provides a ligand contact to L-serine.

This sequence belongs to the class-II aminoacyl-tRNA synthetase family. Type-1 seryl-tRNA synthetase subfamily. Homodimer. The tRNA molecule binds across the dimer.

It localises to the cytoplasm. It catalyses the reaction tRNA(Ser) + L-serine + ATP = L-seryl-tRNA(Ser) + AMP + diphosphate + H(+). The catalysed reaction is tRNA(Sec) + L-serine + ATP = L-seryl-tRNA(Sec) + AMP + diphosphate + H(+). Its pathway is aminoacyl-tRNA biosynthesis; selenocysteinyl-tRNA(Sec) biosynthesis; L-seryl-tRNA(Sec) from L-serine and tRNA(Sec): step 1/1. In terms of biological role, catalyzes the attachment of serine to tRNA(Ser). Is also able to aminoacylate tRNA(Sec) with serine, to form the misacylated tRNA L-seryl-tRNA(Sec), which will be further converted into selenocysteinyl-tRNA(Sec). The sequence is that of Serine--tRNA ligase from Bartonella bacilliformis (strain ATCC 35685 / KC583 / Herrer 020/F12,63).